A 280-amino-acid polypeptide reads, in one-letter code: Truncated lectin 2 (280 aa).

The first 26 residues, 1-26, serve as a signal peptide directing secretion; it reads MSSSNFSCILSISLTFFILLLNKVNS. 2 residues coordinate Mn(2+): E148 and D150. Ca(2+)-binding residues include D150, F152, N154, and D158. D158 lines the Mn(2+) pocket. N163 carries an N-linked (GlcNAc...) asparagine glycan. Residue H170 participates in Mn(2+) binding. N-linked (GlcNAc...) asparagine glycosylation is present at N272.

The protein belongs to the leguminous lectin family.

The polypeptide is Truncated lectin 2 (LEC2) (Medicago truncatula (Barrel medic)).